The chain runs to 483 residues: Glutamyl-tRNA(Gln) amidotransferase subunit A (483 aa).

Residues Lys-77 and Ser-152 each act as charge relay system in the active site. The active-site Acyl-ester intermediate is the Ser-176.

It belongs to the amidase family. GatA subfamily. As to quaternary structure, heterotrimer of A, B and C subunits.

The catalysed reaction is L-glutamyl-tRNA(Gln) + L-glutamine + ATP + H2O = L-glutaminyl-tRNA(Gln) + L-glutamate + ADP + phosphate + H(+). Functionally, allows the formation of correctly charged Gln-tRNA(Gln) through the transamidation of misacylated Glu-tRNA(Gln) in organisms which lack glutaminyl-tRNA synthetase. The reaction takes place in the presence of glutamine and ATP through an activated gamma-phospho-Glu-tRNA(Gln). This chain is Glutamyl-tRNA(Gln) amidotransferase subunit A, found in Listeria welshimeri serovar 6b (strain ATCC 35897 / DSM 20650 / CCUG 15529 / CIP 8149 / NCTC 11857 / SLCC 5334 / V8).